A 536-amino-acid chain; its full sequence is DEAD-box ATP-dependent RNA helicase 41 (536 aa).

Over residues 1–10 (MEQEENHSAD) the composition is skewed to basic and acidic residues. The tract at residues 1–25 (MEQEENHSADHLSAQPGNGNELEES) is disordered. The segment at 40 to 69 (GEPRCVICGRYGEYICDQTDDDICSVECKT) adopts an HIT-type zinc-finger fold. A Q motif motif is present at residues 137–165 (MCFSSSGLPEKLVLNLEAAGYVMPTPVQM). The 177-residue stretch at 168–344 (IPSSICNRSL…NSLAKNAIHI (177 aa)) folds into the Helicase ATP-binding domain. An ATP-binding site is contributed by 181–188 (ADTGSGKT). A DEAD box motif is present at residues 293–296 (DEVD). The Helicase C-terminal domain maps to 355–518 (SVKQVVIWVE…PIPRELANSK (164 aa)).

This sequence belongs to the DEAD box helicase family. DDX59 subfamily.

It carries out the reaction ATP + H2O = ADP + phosphate + H(+). The chain is DEAD-box ATP-dependent RNA helicase 41 from Oryza sativa subsp. japonica (Rice).